A 185-amino-acid polypeptide reads, in one-letter code: Elongation factor P (185 aa).

It belongs to the elongation factor P family.

The protein resides in the cytoplasm. It functions in the pathway protein biosynthesis; polypeptide chain elongation. In terms of biological role, involved in peptide bond synthesis. Stimulates efficient translation and peptide-bond synthesis on native or reconstituted 70S ribosomes in vitro. Probably functions indirectly by altering the affinity of the ribosome for aminoacyl-tRNA, thus increasing their reactivity as acceptors for peptidyl transferase. The protein is Elongation factor P of Lactococcus lactis subsp. cremoris (strain MG1363).